Consider the following 319-residue polypeptide: Dimethyladenosine transferase (319 aa).

The S-adenosyl-L-methionine site is built by His37, Leu39, Gly64, Glu85, Asp113, and Asn128.

This sequence belongs to the class I-like SAM-binding methyltransferase superfamily. rRNA adenine N(6)-methyltransferase family.

The catalysed reaction is adenosine(1779)/adenosine(1780) in 18S rRNA + 4 S-adenosyl-L-methionine = N(6)-dimethyladenosine(1779)/N(6)-dimethyladenosine(1780) in 18S rRNA + 4 S-adenosyl-L-homocysteine + 4 H(+). Specifically dimethylates two adjacent adenosines in the loop of a conserved hairpin near the 3'-end of 18S rRNA in the 40S particle. The sequence is that of Dimethyladenosine transferase (DIM1) from Eremothecium gossypii (strain ATCC 10895 / CBS 109.51 / FGSC 9923 / NRRL Y-1056) (Yeast).